Consider the following 297-residue polypeptide: B-lymphocyte antigen CD20 (297 aa).

Residues 1 to 56 (MTTPRNSVNGTFPAEPMKGPIAMQSGPKPLFRRMSSLVGPTQSFFMRESKTLGAVQ) lie on the Cytoplasmic side of the membrane. Ser-36 is subject to Phosphoserine. A helical membrane pass occupies residues 57 to 78 (IMNGLFHIALGGLLMIPAGIYA). Residues 74–80 (AGIYAPI) form an epitope 1 region. Over 79–84 (PICVTV) the chain is Extracellular. Residues 85 to 105 (WYPLWGGIMYIISGSLLAATE) traverse the membrane as a helical segment. Over 106-120 (KNSRKCLVKGKMIMN) the chain is Cytoplasmic. Residue Cys-111 is the site of S-palmitoyl cysteine attachment. A helical transmembrane segment spans residues 121 to 141 (SLSLFAAISGMILSIMDILNI). At 142–188 (KISHFLKMESLNFIRAHTPYINIYNCEPANPSEKNSPSTQYCYSIQS) the chain is on the extracellular side. Residues 146-160 (FLKMESLNFIRAHTP) form an epitope 2 region. Cys-167 and Cys-183 form a disulfide bridge. The interval 168-175 (EPANPSEK) is epitope 3 (recognized by antibodies, including Rituximab). The chain crosses the membrane as a helical span at residues 189–209 (LFLGILSVMLIFAFFQELVIA). Topologically, residues 210-297 (GIVENEWKRT…SSPIENDSSP (88 aa)) are cytoplasmic. Cys-220 is lipidated: S-palmitoyl cysteine. Ser-225 bears the Phosphoserine mark. Thr-239 bears the Phosphothreonine mark. Residues 247-297 (VGLTETSSQPKNEEDIEIIPIQEEEEEETETNFPEPPQDQESSPIENDSSP) form a disordered region. A compositionally biased stretch (acidic residues) spans 260–276 (EDIEIIPIQEEEEEETE). Positions 285-297 (DQESSPIENDSSP) are enriched in polar residues.

The protein belongs to the MS4A family. Forms homotetramers. Interacts with the heavy and light chains of cell surface IgM, the antigen-binding components of the BCR. In terms of processing, phosphorylated on serines and threonines in resting B-cells. Protein kinase C/PKC can use CD20 as substrate. As to expression, expressed on B-cells.

It is found in the cell membrane. Functionally, B-lymphocyte-specific membrane protein that plays a role in the regulation of cellular calcium influx necessary for the development, differentiation, and activation of B-lymphocytes. Functions as a store-operated calcium (SOC) channel component promoting calcium influx after activation by the B-cell receptor/BCR. This is B-lymphocyte antigen CD20 (MS4A1) from Homo sapiens (Human).